The sequence spans 213 residues: Na(+)-translocating NADH-quinone reductase subunit D (213 aa).

7 helical membrane-spanning segments follow: residues 21–41 (PLIA…VNTA), 42–62 (LTMG…VSLL), 77–97 (IIIS…FFDI), 101–121 (LSVF…AESL), 131–151 (FLDG…VSII), 153–173 (EFFG…FYAS), and 183–203 (FGLM…IWGV).

This sequence belongs to the NqrDE/RnfAE family. Composed of six subunits; NqrA, NqrB, NqrC, NqrD, NqrE and NqrF.

It is found in the cell inner membrane. It carries out the reaction a ubiquinone + n Na(+)(in) + NADH + H(+) = a ubiquinol + n Na(+)(out) + NAD(+). In terms of biological role, NQR complex catalyzes the reduction of ubiquinone-1 to ubiquinol by two successive reactions, coupled with the transport of Na(+) ions from the cytoplasm to the periplasm. NqrA to NqrE are probably involved in the second step, the conversion of ubisemiquinone to ubiquinol. In Chlamydia abortus (strain DSM 27085 / S26/3) (Chlamydophila abortus), this protein is Na(+)-translocating NADH-quinone reductase subunit D.